A 495-amino-acid chain; its full sequence is Probable cytosol aminopeptidase (495 aa).

Mn(2+)-binding residues include Lys-267 and Asp-272. Lys-279 is an active-site residue. Mn(2+) is bound by residues Asp-290, Asp-349, and Glu-351. Residue Arg-353 is part of the active site.

This sequence belongs to the peptidase M17 family. Mn(2+) is required as a cofactor.

It localises to the cytoplasm. The enzyme catalyses Release of an N-terminal amino acid, Xaa-|-Yaa-, in which Xaa is preferably Leu, but may be other amino acids including Pro although not Arg or Lys, and Yaa may be Pro. Amino acid amides and methyl esters are also readily hydrolyzed, but rates on arylamides are exceedingly low.. It catalyses the reaction Release of an N-terminal amino acid, preferentially leucine, but not glutamic or aspartic acids.. Functionally, presumably involved in the processing and regular turnover of intracellular proteins. Catalyzes the removal of unsubstituted N-terminal amino acids from various peptides. This Histophilus somni (strain 129Pt) (Haemophilus somnus) protein is Probable cytosol aminopeptidase.